The chain runs to 489 residues: Ulvan Lyase-PL25 (489 aa).

Residues 1–31 (MNLNKTLRKNSPSGYKALLTFSIICGLMATG) form the signal peptide. Cys32 is lipidated: N-palmitoyl cysteine. Residue Cys32 is the site of S-diacylglycerol cysteine attachment. 2 residues coordinate substrate: Asn60 and Asn122. His123 functions as the Proton donor in the catalytic mechanism. The substrate site is built by Lys125 and His143. The active-site Proton acceptor is Tyr188. Positions 204, 208, and 246 each coordinate substrate. Zn(2+) is bound at residue His208. 3 residues coordinate Zn(2+): His264, Cys266, and His278. His278 serves as a coordination point for substrate.

This sequence belongs to the polysaccharide lyase 25 family.

The protein localises to the cell membrane. Functionally, ulvan lyase involved in ulvan degradation. Ulvan is the main polysaccharide component of the Ulvales (green seaweed) cell wall. It is composed of disaccharide building blocks comprising 3-sulfated rhamnose (Rha3S) linked to D-glucuronic acid (GlcA), L-iduronic acid (IduA), or D-xylose (Xyl). Ulvan lyase catalyzes the endolytic cleavage of the glycosidic bond between Rha3S and the uronic acids GlcA or IduA, producing oligosaccharides that have unsaturated 4-deoxy-L-threo-hex-4-enopyranosiduronic acid (deltaUA) at the non-reducing end. This results eventually in the degradation of the ulvan polysaccharide into deltaUA-Rha3S disaccharides and deltaUA-Rha3S-Xyl-Rha3S tetrasaccharides. This Pseudoalteromonas sp. (strain PLSV) protein is Ulvan Lyase-PL25.